The chain runs to 673 residues: DNA ligase (673 aa).

Residues 32 to 36 (DHVYD), 81 to 82 (SL), and E111 each bind NAD(+). K113 (N6-AMP-lysine intermediate) is an active-site residue. NAD(+) contacts are provided by R134, E171, K286, and K310. C404, C407, C422, and C428 together coordinate Zn(2+). The region spanning 595-673 (NIIDEYKNKT…NEFWKKDNNF (79 aa)) is the BRCT domain.

Belongs to the NAD-dependent DNA ligase family. LigA subfamily. Mg(2+) serves as cofactor. Mn(2+) is required as a cofactor.

It carries out the reaction NAD(+) + (deoxyribonucleotide)n-3'-hydroxyl + 5'-phospho-(deoxyribonucleotide)m = (deoxyribonucleotide)n+m + AMP + beta-nicotinamide D-nucleotide.. In terms of biological role, DNA ligase that catalyzes the formation of phosphodiester linkages between 5'-phosphoryl and 3'-hydroxyl groups in double-stranded DNA using NAD as a coenzyme and as the energy source for the reaction. It is essential for DNA replication and repair of damaged DNA. This Ureaplasma parvum serovar 3 (strain ATCC 27815 / 27 / NCTC 11736) protein is DNA ligase.